Consider the following 256-residue polypeptide: Ribosomal RNA small subunit methyltransferase J (256 aa).

S-adenosyl-L-methionine-binding positions include arginine 101–aspartate 102, glutamate 117–arginine 118, serine 153–serine 154, and aspartate 176.

Belongs to the methyltransferase superfamily. RsmJ family.

It is found in the cytoplasm. It carries out the reaction guanosine(1516) in 16S rRNA + S-adenosyl-L-methionine = N(2)-methylguanosine(1516) in 16S rRNA + S-adenosyl-L-homocysteine + H(+). Functionally, specifically methylates the guanosine in position 1516 of 16S rRNA. This Photobacterium profundum (strain SS9) protein is Ribosomal RNA small subunit methyltransferase J.